Consider the following 212-residue polypeptide: uncharacterized protein (212 aa).

Belongs to the mimivirus R683/R861 family.

This is an uncharacterized protein from Acanthamoeba polyphaga (Amoeba).